The primary structure comprises 642 residues: MKKTKTYQVFCIAALSVLTLQLINGSSAATPPPPNSNSSTSCNRACGGVSIPFPFGIGKDCYLNGWYEVICNTSTSGSSGTTVPFLSRINSEVVNISLPDGKKLYGVVHIKGPVTSLGCSSSSSSSQVSEMSLPNLNVTGRGSPYFLTDENCLVMVGCGTKALMKDIESEILGCESSCEDSKSSEEVTNSKCDGYKCCQARIPLERPQVIGINIENTSATRGKEGCSVAFLTNKRYAPMNVTEPEQFHAGGYAVVELGWYFDTSDSRYRNPLGCRNMTRYSSYSSFDKCSCEYDYFSGMSYRICYCNYGYTGNPYLRHGCIDIDECEGHHNCGEGTCVNMPGTHSCEPKITKPEKASVLQGVLISLGVLLFVLGILGLYKFIKKRTRIIRNKNFFKRNGGLLLKQQLITKNGNVDMSRIFSSKELKKATDNFSMNRVLGQGGQGTVYKGMLAEGRIVAVKRSKVVGEGKMEEFINEVVLLSQINHRNIVKLLGCCLETEVPVLVYEYIPNGDLFKRLHEKSESNDYTMTWEVRLRIAIEIAGALSYMHSAASIPIYHRDIKTTNILLDEKYRAKVSDFGTSRSITIAQTHLTTLVAGTFGYMDPEYFLSSQYTDKSDVYSFGVVLVELITGEKPLSRKRIGN.

The signal sequence occupies residues 1 to 28 (MKKTKTYQVFCIAALSVLTLQLINGSSA). Residues 29-357 (ATPPPPNSNS…PKITKPEKAS (329 aa)) are Extracellular-facing. N-linked (GlcNAc...) asparagine glycosylation is found at asparagine 37, asparagine 72, asparagine 95, asparagine 137, asparagine 216, asparagine 240, and asparagine 276. The interval 289-346 (CSCEYDYFSGMSYRICYCNYGYTGNPYLRHGCIDIDECEGHHNCGEGTCVNMPGTHSC) is atypical EGF-like. Intrachain disulfides connect cysteine 291–cysteine 304, cysteine 326–cysteine 337, and cysteine 332–cysteine 346. A helical membrane pass occupies residues 358–378 (VLQGVLISLGVLLFVLGILGL). Over 379 to 642 (YKFIKKRTRI…KPLSRKRIGN (264 aa)) the chain is Cytoplasmic. The region spanning 432-642 (FSMNRVLGQG…KPLSRKRIGN (211 aa)) is the Protein kinase domain. Residues 438–446 (LGQGGQGTV) and lysine 460 each bind ATP. Phosphotyrosine is present on tyrosine 505. The Proton acceptor role is filled by aspartate 559. Threonine 593 and threonine 598 each carry phosphothreonine. Tyrosine 606 is modified (phosphotyrosine).

Belongs to the protein kinase superfamily. Ser/Thr protein kinase family. Slightly expressed in the whole plant.

The protein resides in the membrane. It carries out the reaction L-seryl-[protein] + ATP = O-phospho-L-seryl-[protein] + ADP + H(+). The enzyme catalyses L-threonyl-[protein] + ATP = O-phospho-L-threonyl-[protein] + ADP + H(+). In terms of biological role, serine/threonine-protein kinase that may function as a signaling receptor of extracellular matrix component. The polypeptide is Wall-associated receptor kinase-like 6 (WAKL6) (Arabidopsis thaliana (Mouse-ear cress)).